The following is a 315-amino-acid chain: Methionyl-tRNA formyltransferase (315 aa).

109-112 (SLLP) contacts (6S)-5,6,7,8-tetrahydrofolate.

This sequence belongs to the Fmt family.

The catalysed reaction is L-methionyl-tRNA(fMet) + (6R)-10-formyltetrahydrofolate = N-formyl-L-methionyl-tRNA(fMet) + (6S)-5,6,7,8-tetrahydrofolate + H(+). Attaches a formyl group to the free amino group of methionyl-tRNA(fMet). The formyl group appears to play a dual role in the initiator identity of N-formylmethionyl-tRNA by promoting its recognition by IF2 and preventing the misappropriation of this tRNA by the elongation apparatus. This chain is Methionyl-tRNA formyltransferase, found in Lachnospira eligens (strain ATCC 27750 / DSM 3376 / VPI C15-48 / C15-B4) (Eubacterium eligens).